Consider the following 484-residue polypeptide: tRNA sulfurtransferase (484 aa).

One can recognise a THUMP domain in the interval 63-167 (REMIERLTCT…LDRLFVIHRQ (105 aa)). Residues 185–186 (LM), Lys267, Gly289, and Gln298 each bind ATP. An intrachain disulfide couples Cys346 to Cys457. Residues 405 to 483 (VLPGQIVIDI…GHTNVRVYRP (79 aa)) form the Rhodanese domain. The active-site Cysteine persulfide intermediate is the Cys457.

It belongs to the ThiI family.

The protein resides in the cytoplasm. It carries out the reaction [ThiI sulfur-carrier protein]-S-sulfanyl-L-cysteine + a uridine in tRNA + 2 reduced [2Fe-2S]-[ferredoxin] + ATP + H(+) = [ThiI sulfur-carrier protein]-L-cysteine + a 4-thiouridine in tRNA + 2 oxidized [2Fe-2S]-[ferredoxin] + AMP + diphosphate. The enzyme catalyses [ThiS sulfur-carrier protein]-C-terminal Gly-Gly-AMP + S-sulfanyl-L-cysteinyl-[cysteine desulfurase] + AH2 = [ThiS sulfur-carrier protein]-C-terminal-Gly-aminoethanethioate + L-cysteinyl-[cysteine desulfurase] + A + AMP + 2 H(+). Its pathway is cofactor biosynthesis; thiamine diphosphate biosynthesis. In terms of biological role, catalyzes the ATP-dependent transfer of a sulfur to tRNA to produce 4-thiouridine in position 8 of tRNAs, which functions as a near-UV photosensor. Also catalyzes the transfer of sulfur to the sulfur carrier protein ThiS, forming ThiS-thiocarboxylate. This is a step in the synthesis of thiazole, in the thiamine biosynthesis pathway. The sulfur is donated as persulfide by IscS. The polypeptide is tRNA sulfurtransferase (Pseudomonas paraeruginosa (strain DSM 24068 / PA7) (Pseudomonas aeruginosa (strain PA7))).